The chain runs to 495 residues: ATP synthase subunit beta, chloroplastic (495 aa).

172-179 lines the ATP pocket; it reads GGAGVGKT.

Belongs to the ATPase alpha/beta chains family. F-type ATPases have 2 components, CF(1) - the catalytic core - and CF(0) - the membrane proton channel. CF(1) has five subunits: alpha(3), beta(3), gamma(1), delta(1), epsilon(1). CF(0) has four main subunits: a(1), b(1), b'(1) and c(9-12).

The protein resides in the plastid. Its subcellular location is the chloroplast thylakoid membrane. It carries out the reaction ATP + H2O + 4 H(+)(in) = ADP + phosphate + 5 H(+)(out). In terms of biological role, produces ATP from ADP in the presence of a proton gradient across the membrane. The catalytic sites are hosted primarily by the beta subunits. This chain is ATP synthase subunit beta, chloroplastic, found in Bowiea volubilis (Climbing onion).